The primary structure comprises 364 residues: Fructose-1,6-bisphosphatase class 1 2 (364 aa).

4 residues coordinate Mg(2+): E99, D121, L123, and D124. Substrate-binding positions include 124-127 and N220; that span reads DGSS. Mg(2+) is bound at residue E292.

Belongs to the FBPase class 1 family. As to quaternary structure, homotetramer. Mg(2+) is required as a cofactor.

Its subcellular location is the cytoplasm. It catalyses the reaction beta-D-fructose 1,6-bisphosphate + H2O = beta-D-fructose 6-phosphate + phosphate. The protein operates within carbohydrate biosynthesis; gluconeogenesis. This Polaromonas naphthalenivorans (strain CJ2) protein is Fructose-1,6-bisphosphatase class 1 2.